The following is a 93-amino-acid chain: Mitochondrial import inner membrane translocase subunit Tim10-A (93 aa).

Residues 32 to 57 (CHKKCVPPHYKEAELSKGESVCLDRC) carry the Twin CX3C motif motif. 2 disulfide bridges follow: cysteine 32/cysteine 57 and cysteine 36/cysteine 53.

Belongs to the small Tim family. As to quaternary structure, heterohexamer; composed of 3 copies of TIMM9 and 3 copies of TIMM10/TIM10A, named soluble 70 kDa complex. The complex forms a 6-bladed alpha-propeller structure and associates with the TIMM22 component of the TIM22 complex. Interacts with multi-pass transmembrane proteins in transit.

The protein localises to the mitochondrion inner membrane. Its function is as follows. Mitochondrial intermembrane chaperone that participates in the import and insertion of multi-pass transmembrane proteins into the mitochondrial inner membrane. May also be required for the transfer of beta-barrel precursors from the TOM complex to the sorting and assembly machinery (SAM complex) of the outer membrane. Acts as a chaperone-like protein that protects the hydrophobic precursors from aggregation and guide them through the mitochondrial intermembrane space. The sequence is that of Mitochondrial import inner membrane translocase subunit Tim10-A (timm10-a) from Xenopus laevis (African clawed frog).